Here is a 421-residue protein sequence, read N- to C-terminus: UDP-glucuronic acid decarboxylase 1 (421 aa).

Residues 1 to 19 (MVRTRIQRLLTGINRRMMK) are Cytoplasmic-facing. A helical transmembrane segment spans residues 20–40 (LLIALALIAYVASVWGNFVNM). Topologically, residues 41–421 (SKSIQENGEQ…RVKKGRTRHN (381 aa)) are lumenal. NAD(+) is bound by residues glycine 99, phenylalanine 100, valine 101, aspartate 120, asparagine 121, phenylalanine 123, threonine 124, glycine 125, aspartate 145, and valine 146. Residues leucine 150 and tyrosine 151 each contribute to the UDP-alpha-D-glucuronate site. Leucine 160 and serine 162 together coordinate NAD(+). Lysine 178 lines the UDP-alpha-D-glucuronate pocket. NAD(+) is bound at residue threonine 179. The UDP-alpha-D-glucuronate site is built by asparagine 186, glycine 189, lysine 192, and arginine 193. NAD(+) contacts are provided by alanine 201, tyrosine 232, and lysine 236. Tyrosine 232 acts as the Proton acceptor in catalysis. UDP-alpha-D-glucuronate-binding residues include tyrosine 246, glutamine 249, and glutamate 250. NAD(+) contacts are provided by threonine 262, histidine 268, and arginine 273. N-linked (GlcNAc...) asparagine glycosylation is found at asparagine 317 and asparagine 386. Positions 400-421 (ANNQYIPKPKPARVKKGRTRHN) are disordered. Basic residues predominate over residues 409–421 (KPARVKKGRTRHN).

This sequence belongs to the NAD(P)-dependent epimerase/dehydratase family. UDP-glucuronic acid decarboxylase subfamily. Homodimer and homotetramer. The cofactor is NAD(+).

The protein resides in the golgi apparatus. The protein localises to the golgi stack membrane. It catalyses the reaction UDP-alpha-D-glucuronate + H(+) = UDP-alpha-D-xylose + CO2. The protein operates within nucleotide-sugar biosynthesis; UDP-alpha-D-xylose biosynthesis; UDP-alpha-D-xylose from UDP-alpha-D-glucuronate: step 1/1. Catalyzes the NAD-dependent decarboxylation of UDP-glucuronic acid to UDP-xylose. Necessary for the biosynthesis of the core tetrasaccharide in glycosaminoglycan biosynthesis. In Xenopus tropicalis (Western clawed frog), this protein is UDP-glucuronic acid decarboxylase 1 (uxs1).